The following is a 188-amino-acid chain: Elongation factor P (188 aa).

Belongs to the elongation factor P family.

It is found in the cytoplasm. Its pathway is protein biosynthesis; polypeptide chain elongation. In terms of biological role, involved in peptide bond synthesis. Stimulates efficient translation and peptide-bond synthesis on native or reconstituted 70S ribosomes in vitro. Probably functions indirectly by altering the affinity of the ribosome for aminoacyl-tRNA, thus increasing their reactivity as acceptors for peptidyl transferase. The protein is Elongation factor P of Sulfurimonas denitrificans (strain ATCC 33889 / DSM 1251) (Thiomicrospira denitrificans (strain ATCC 33889 / DSM 1251)).